The following is a 126-amino-acid chain: Histone H2B type F-S (126 aa).

Residues Met-1 to Lys-12 show a composition bias toward low complexity. A disordered region spans residues Met-1 to Glu-36. Pro-2 bears the N-acetylproline mark. Glu-3 carries the ADP-ribosyl glutamic acid modification. Lys-6 bears the N6-(2-hydroxyisobutyryl)lysine; alternate mark. Lys-6 carries the N6-(beta-hydroxybutyryl)lysine; alternate modification. Lys-6 carries the post-translational modification N6-acetyllysine; alternate. Lys-6 is subject to N6-butyryllysine; alternate. At Lys-6 the chain carries N6-crotonyllysine; alternate. Lys-6 carries the post-translational modification N6-lactoyllysine; alternate. Lys-6 participates in a covalent cross-link: Glycyl lysine isopeptide (Lys-Gly) (interchain with G-Cter in SUMO2); alternate. Ser-7 bears the ADP-ribosylserine mark. Lys-12 carries the post-translational modification N6-(beta-hydroxybutyryl)lysine; alternate. Lys-12 and Lys-13 each carry N6-acetyllysine; alternate. Lys-12 and Lys-13 each carry N6-crotonyllysine; alternate. An N6-lactoyllysine; alternate modification is found at Lys-12. Lys-13 carries the post-translational modification N6-(2-hydroxyisobutyryl)lysine; alternate. Residue Ser-15 is modified to Phosphoserine; by STK4/MST1. 4 positions are modified to N6-acetyllysine; alternate: Lys-16, Lys-17, Lys-21, and Lys-24. 4 positions are modified to N6-crotonyllysine; alternate: Lys-16, Lys-17, Lys-21, and Lys-24. N6-lactoyllysine; alternate is present on residues Lys-16, Lys-17, Lys-21, and Lys-24. 2 positions are modified to N6-(beta-hydroxybutyryl)lysine; alternate: Lys-17 and Lys-21. An N6-glutaryllysine; alternate modification is found at Lys-17. N6-(2-hydroxyisobutyryl)lysine; alternate is present on residues Lys-21 and Lys-24. At Lys-21 the chain carries N6-butyryllysine; alternate. Lys-21 participates in a covalent cross-link: Glycyl lysine isopeptide (Lys-Gly) (interchain with G-Cter in SUMO2); alternate. Lys-25 bears the N6-(2-hydroxyisobutyryl)lysine mark. Residue Lys-35 is modified to N6-(2-hydroxyisobutyryl)lysine; alternate. An N6-(beta-hydroxybutyryl)lysine; alternate modification is found at Lys-35. Lys-35 carries the post-translational modification N6-crotonyllysine; alternate. Lys-35 is modified (N6-glutaryllysine; alternate). Lys-35 bears the N6-succinyllysine; alternate mark. Lys-35 is covalently cross-linked (Glycyl lysine isopeptide (Lys-Gly) (interchain with G-Cter in ubiquitin); alternate). Residue Glu-36 is modified to PolyADP-ribosyl glutamic acid. Ser-37 carries the post-translational modification Phosphoserine; by AMPK. N6-(2-hydroxyisobutyryl)lysine; alternate occurs at positions 44, 47, and 58. Residue Lys-44 is modified to N6-lactoyllysine; alternate. N6-glutaryllysine; alternate is present on residues Lys-44 and Lys-47. Lys-47 is modified (N6-methyllysine; alternate). An N6,N6-dimethyllysine; alternate modification is found at Lys-58. Arg-80 bears the Dimethylated arginine mark. Lys-86 carries the N6-(2-hydroxyisobutyryl)lysine; alternate modification. The residue at position 86 (Lys-86) is an N6-(beta-hydroxybutyryl)lysine; alternate. N6-acetyllysine; alternate is present on Lys-86. An N6-lactoyllysine; alternate modification is found at Lys-86. Lys-86 carries the N6,N6,N6-trimethyllysine; alternate modification. Arg-87 and Arg-93 each carry omega-N-methylarginine. Lys-109 bears the N6-(2-hydroxyisobutyryl)lysine; alternate mark. Lys-109 is subject to N6-lactoyllysine; alternate. Residue Lys-109 is modified to N6-glutaryllysine; alternate. Residue Lys-109 is modified to N6-methyllysine; alternate. O-linked (GlcNAc) serine glycosylation is present at Ser-113. A Phosphothreonine modification is found at Thr-116. Residues Lys-117 and Lys-121 each carry the N6-(2-hydroxyisobutyryl)lysine; alternate modification. N6-(beta-hydroxybutyryl)lysine; alternate is present on residues Lys-117 and Lys-121. Residues Lys-117 and Lys-121 each carry the N6-lactoyllysine; alternate modification. 2 positions are modified to N6-glutaryllysine; alternate: Lys-117 and Lys-121. An N6-succinyllysine; alternate mark is found at Lys-117 and Lys-121. Lys-117 bears the N6-malonyllysine; alternate mark. Position 117 is an N6-methylated lysine; alternate (Lys-117). A Glycyl lysine isopeptide (Lys-Gly) (interchain with G-Cter in ubiquitin); alternate cross-link involves residue Lys-121.

This sequence belongs to the histone H2B family. The nucleosome is a histone octamer containing two molecules each of H2A, H2B, H3 and H4 assembled in one H3-H4 heterotetramer and two H2A-H2B heterodimers. The octamer wraps approximately 147 bp of DNA. In terms of processing, monoubiquitination at Lys-35 (H2BK34Ub) by the MSL1/MSL2 dimer is required for histone H3 'Lys-4' (H3K4me) and 'Lys-79' (H3K79me) methylation and transcription activation at specific gene loci, such as HOXA9 and MEIS1 loci. Similarly, monoubiquitination at Lys-121 (H2BK120Ub) by the RNF20/40 complex gives a specific tag for epigenetic transcriptional activation and is also prerequisite for histone H3 'Lys-4' and 'Lys-79' methylation. It also functions cooperatively with the FACT dimer to stimulate elongation by RNA polymerase II. H2BK120Ub also acts as a regulator of mRNA splicing: deubiquitination by USP49 is required for efficient cotranscriptional splicing of a large set of exons. Post-translationally, phosphorylation at Ser-37 (H2BS36ph) by AMPK in response to stress promotes transcription. Phosphorylated on Ser-15 (H2BS14ph) by STK4/MST1 during apoptosis; which facilitates apoptotic chromatin condensation. Also phosphorylated on Ser-15 in response to DNA double strand breaks (DSBs), and in correlation with somatic hypermutation and immunoglobulin class-switch recombination. GlcNAcylation at Ser-113 promotes monoubiquitination of Lys-121. It fluctuates in response to extracellular glucose, and associates with transcribed genes. In terms of processing, ADP-ribosylated by PARP1 or PARP2 on Ser-7 (H2BS6ADPr) in response to DNA damage. H2BS6ADPr promotes recruitment of CHD1L. Mono-ADP-ribosylated on Glu-3 (H2BE2ADPr) by PARP3 in response to single-strand breaks. Poly ADP-ribosylation on Glu-36 (H2BE35ADPr) by PARP1 regulates adipogenesis: it inhibits phosphorylation at Ser-37 (H2BS36ph), thereby blocking expression of pro-adipogenetic genes. Post-translationally, crotonylation (Kcr) is specifically present in male germ cells and marks testis-specific genes in post-meiotic cells, including X-linked genes that escape sex chromosome inactivation in haploid cells. Crotonylation marks active promoters and enhancers and confers resistance to transcriptional repressors. It is also associated with post-meiotically activated genes on autosomes. Lactylated in macrophages by EP300/P300 by using lactoyl-CoA directly derived from endogenous or exogenous lactate, leading to stimulates gene transcription.

The protein resides in the nucleus. Its subcellular location is the chromosome. Core component of nucleosome. Nucleosomes wrap and compact DNA into chromatin, limiting DNA accessibility to the cellular machineries which require DNA as a template. Histones thereby play a central role in transcription regulation, DNA repair, DNA replication and chromosomal stability. DNA accessibility is regulated via a complex set of post-translational modifications of histones, also called histone code, and nucleosome remodeling. In terms of biological role, has broad antibacterial activity. May contribute to the formation of the functional antimicrobial barrier of the colonic epithelium, and to the bactericidal activity of amniotic fluid. The protein is Histone H2B type F-S of Homo sapiens (Human).